Here is a 679-residue protein sequence, read N- to C-terminus: Stress-70 protein, mitochondrial (679 aa).

Residues 1-46 (MISATRAAAARLVGTAASRTPAAARHQDGWNGLSHEAFRFVSRRDY) constitute a mitochondrion transit peptide. The segment at 1–432 (MISATRAAAA…IQGGVLAGDV (432 aa)) is interaction with NFS1. Residues Thr-63 and Asn-64 each coordinate ADP. A nucleotide-binding domain (NBD) region spans residues 63 to 431 (TNSCVAVMEG…AIQGGVLAGD (369 aa)). Lys-76 bears the N6-acetyllysine mark. The residue at position 87 (Thr-87) is a Phosphothreonine. 2 positions are modified to N6-acetyllysine; alternate: Lys-135 and Lys-138. N6-succinyllysine; alternate is present on residues Lys-135 and Lys-138. Lys-143 is subject to N6-acetyllysine. Lys-206 bears the N6-acetyllysine; alternate mark. The residue at position 206 (Lys-206) is an N6-succinyllysine; alternate. An N6-malonyllysine; alternate modification is found at Lys-206. 2 positions are modified to N6-acetyllysine: Lys-234 and Lys-288. An N6-acetyllysine; alternate modification is found at Lys-300. N6-succinyllysine; alternate is present on Lys-300. ADP is bound by residues Glu-313, Lys-316, and Ser-320. Lys-360 is modified (N6-acetyllysine; alternate). Lys-360 carries the post-translational modification N6-succinyllysine; alternate. Position 368 is an N6-succinyllysine (Lys-368). ADP is bound by residues Gly-388 and Arg-391. Lys-394 carries the N6-succinyllysine modification. Phosphoserine is present on Ser-408. An interdomain linker region spans residues 432–441 (VTDVLLLDVT). An interaction with FXN and ISCU region spans residues 432 to 679 (VTDVLLLDVT…QKEDQKEEKQ (248 aa)). Residues 442 to 679 (PLSLGIETLG…QKEDQKEEKQ (238 aa)) form a substrate-binding domain (SBD) region. Arg-513 carries the post-translational modification Omega-N-methylarginine. Lys-567 and Lys-600 each carry N6-acetyllysine; alternate. An N6-succinyllysine; alternate mark is found at Lys-567 and Lys-600. Lys-610 bears the N6-succinyllysine mark. N6-acetyllysine is present on Lys-612. Lys-646 carries the post-translational modification N6-acetyllysine; alternate. Residue Lys-646 is modified to N6-succinyllysine; alternate. Residues 656–679 (ASEREGSGSSGTGEQKEDQKEEKQ) form a disordered region. Over residues 669–679 (EQKEDQKEEKQ) the composition is skewed to basic and acidic residues.

This sequence belongs to the heat shock protein 70 family. In terms of assembly, interacts strongly with the intermediate form of FXN and weakly with its mature form. Interacts with HSCB. Associates with the mitochondrial contact site and cristae organizing system (MICOS) complex, composed of at least MICOS10/MIC10, CHCHD3/MIC19, CHCHD6/MIC25, APOOL/MIC27, IMMT/MIC60, APOO/MIC23/MIC26 and QIL1/MIC13. This complex was also known under the names MINOS or MitOS complex. The MICOS complex associates with mitochondrial outer membrane proteins SAMM50, MTX1, MTX2 and DNAJC11, mitochondrial inner membrane protein TMEM11 and with HSPA9. Interacts with DNLZ, the interaction is required to prevent self-aggregation. Interacts with TESPA1. Interacts with PDPN. Interacts with NFU1, NFS1 and ISCU. Interacts with TP53; the interaction promotes TP53 degradation. Interacts (via SBD domain) with UBXN2A; the interaction with UBXN2A inhibits HSPA9/MOT-2 interaction with and degradation of TP53, thereby promotes TP53 translocation to the nucleus. Interacts with ITPR1 AND VDAC1; this interaction couples ITPR1 to VDAC1. Component of the TIM23 mitochondrial inner membrane pre-sequence translocase complex.

The protein resides in the mitochondrion. It localises to the nucleus. Its subcellular location is the nucleolus. It is found in the cytoplasm. The protein localises to the mitochondrion matrix. The catalysed reaction is ATP + H2O = ADP + phosphate + H(+). The chaperone activity is regulated by ATP-induced allosteric coupling of the nucleotide-binding (NBD) and substrate-binding (SBD) domains. ATP binding in the NBD leads to a conformational change in the NBD, which is transferred through the interdomain linker (IDL) to the substrate-binding domain (SBD). This elicits a reduced substrate affinity and a faster substrate exchange rate. Upon hydrolysis of ATP to ADP, the protein undergoes a conformational change that increases its affinity for substrate proteins. It cycles through repeated phases of ATP hydrolysis and nucleotide exchange, facilitating repeated cycles of substrate binding and release. Functions in collaboration with co-chaperones. Functions with the co-chaperone, DNLZ, to maintain solubility and regulate ATP hydrolysis. Nucleotide exchange factors, GRPEL1 and GRPEL2, accelerate nucleotide exchange. Functionally, mitochondrial chaperone that plays a key role in mitochondrial protein import, folding, and assembly. Plays an essential role in the protein quality control system, the correct folding of proteins, the re-folding of misfolded proteins, and the targeting of proteins for subsequent degradation. These processes are achieved through cycles of ATP binding, ATP hydrolysis, and ADP release, mediated by co-chaperones. In mitochondria, it associates with the TIM (translocase of the inner membrane) protein complex to assist in the import and folding of mitochondrial proteins. Plays an important role in mitochondrial iron-sulfur cluster (ISC) biogenesis, interacts with and stabilizes ISC cluster assembly proteins FXN, NFU1, NFS1 and ISCU. Regulates erythropoiesis via stabilization of ISC assembly. Regulates mitochondrial calcium-dependent apoptosis by coupling two calcium channels, ITPR1 and VDAC1, at the mitochondria-associated endoplasmic reticulum (ER) membrane to facilitate calcium transport from the ER lumen to the mitochondria intermembrane space, providing calcium for the downstream calcium channel MCU, which releases it into the mitochondrial matrix. Although primarily located in the mitochondria, it is also found in other cellular compartments. In the cytosol, it associates with proteins involved in signaling, apoptosis, or senescence. It may play a role in cell cycle regulation via its interaction with and promotion of degradation of TP53. May play a role in the control of cell proliferation and cellular aging. Protects against reactive oxygen species (ROS). Extracellular HSPA9 plays a cytoprotective role by preventing cell lysis following immune attack by the membrane attack complex by disrupting formation of the complex. In Cricetulus griseus (Chinese hamster), this protein is Stress-70 protein, mitochondrial.